The chain runs to 215 residues: Ribonuclease T (215 aa).

The region spanning 20-194 (VVIDVETAGF…YDTLQTAKLF (175 aa)) is the Exonuclease domain. Mg(2+) is bound by residues D23, E25, H181, and D186. Residue H181 is the Proton donor/acceptor of the active site.

It belongs to the RNase T family. As to quaternary structure, homodimer. Mg(2+) is required as a cofactor.

Its function is as follows. Trims short 3' overhangs of a variety of RNA species, leaving a one or two nucleotide 3' overhang. Responsible for the end-turnover of tRNA: specifically removes the terminal AMP residue from uncharged tRNA (tRNA-C-C-A). Also appears to be involved in tRNA biosynthesis. The polypeptide is Ribonuclease T (Yersinia pestis).